A 253-amino-acid polypeptide reads, in one-letter code: UPF0246 protein lhv_1883 (253 aa).

Belongs to the UPF0246 family.

The polypeptide is UPF0246 protein lhv_1883 (Lactobacillus helveticus (strain DPC 4571)).